Reading from the N-terminus, the 65-residue chain is Large ribosomal subunit protein bL31 (65 aa).

Cys16, Cys18, Cys36, and Cys39 together coordinate Zn(2+).

This sequence belongs to the bacterial ribosomal protein bL31 family. Type A subfamily. In terms of assembly, part of the 50S ribosomal subunit. Zn(2+) serves as cofactor.

Its function is as follows. Binds the 23S rRNA. This chain is Large ribosomal subunit protein bL31, found in Campylobacter jejuni subsp. doylei (strain ATCC BAA-1458 / RM4099 / 269.97).